The chain runs to 444 residues: Transcription factor PIF5 (444 aa).

The involved in interaction with phyB stretch occupies residues 26-39; the sequence is EDELVELLWRDGQV. Disordered regions lie at residues 154–265 and 416–444; these read HCGS…NLSE and MLGF…GKIG. A compositionally biased stretch (polar residues) spans 155–171; the sequence is CGSNQSTNIHQATTLPV. Basic and acidic residues predominate over residues 175 to 185; it reads DRSKNVEERLD. Low complexity predominate over residues 187–197; that stretch reads SSGGSSGCSYG. Residues 224 to 244 are compositionally biased toward polar residues; the sequence is ESVSQSDIGLTSTDDQTMGNK. Over residues 256 to 265 the composition is skewed to basic and acidic residues; the sequence is RAAEVHNLSE. The bHLH domain occupies 256-305; sequence RAAEVHNLSERRRRDRINERMKALQELIPHCSRTDKASILDEAIDYLKSL. Residues 424–437 are compositionally biased toward polar residues; that stretch reads GPQSQLSAPATTDS. Ser437 carries the post-translational modification Phosphoserine.

In terms of assembly, homodimer. Interacts specifically with the Pfr form of phytochrome B and with TOC1/APRR1. May form a heterodimer with PIF3. Interacts with PHYB, CRY1 and CRY2 in the nucleus in response to low blue light (LBL). Interacts with TOPP4. Associates to PTAC12/HMR/PAP5 which acts as a transcriptional coactivator. In terms of processing, phosphorylated. Additional phosphorylations induced within 60 seconds following phytochrome B photoactivation. Dephosphorylated by TOPP4 during photomorphogenesis, leading to subsequent degradation of PIF5 by the proteasomal pathway. In terms of tissue distribution, mainly expressed in leaves and seedlings, and, to a lower extent, in stems, fruits, flowers and roots.

It localises to the nucleus. In terms of biological role, transcription factor acting negatively in the phytochrome B signaling pathway to promote the shade-avoidance response. Regulates PHYB abundance at the post-transcriptional level, possibly via the ubiquitin-proteasome pathway. Promotes ethylene activity in the dark. May regulate the expression of a subset of genes by binding to the G-box motif. Might be involved in the integration of light-signals to control both circadian and photomorphogenic processes. Activated by CRY1 and CRY2 in response to low blue light (LBL) by direct binding at chromatin on E-box variant 5'-CA[CT]GTG-3' to stimulate specific gene expression to adapt global physiology (e.g. hypocotyl elongation in low blue light). This Arabidopsis thaliana (Mouse-ear cress) protein is Transcription factor PIF5.